Here is a 190-residue protein sequence, read N- to C-terminus: Elongation factor P-like protein (190 aa).

The protein belongs to the elongation factor P family.

The sequence is that of Elongation factor P-like protein from Pectobacterium atrosepticum (strain SCRI 1043 / ATCC BAA-672) (Erwinia carotovora subsp. atroseptica).